Consider the following 217-residue polypeptide: Peptide methionine sulfoxide reductase MsrA 1 (217 aa).

Residue cysteine 54 is part of the active site.

It belongs to the MsrA Met sulfoxide reductase family.

It carries out the reaction L-methionyl-[protein] + [thioredoxin]-disulfide + H2O = L-methionyl-(S)-S-oxide-[protein] + [thioredoxin]-dithiol. The enzyme catalyses [thioredoxin]-disulfide + L-methionine + H2O = L-methionine (S)-S-oxide + [thioredoxin]-dithiol. Functionally, has an important function as a repair enzyme for proteins that have been inactivated by oxidation. Catalyzes the reversible oxidation-reduction of methionine sulfoxide in proteins to methionine. This chain is Peptide methionine sulfoxide reductase MsrA 1 (msrA1), found in Caulobacter vibrioides (strain ATCC 19089 / CIP 103742 / CB 15) (Caulobacter crescentus).